Consider the following 561-residue polypeptide: Malate synthase, glyoxysomal (561 aa).

The Proton acceptor role is filled by R177. The active-site Proton donor is the D462. The Microbody targeting signal signature appears at 559-561 (SRL).

The protein belongs to the malate synthase family.

The protein localises to the glyoxysome. It carries out the reaction glyoxylate + acetyl-CoA + H2O = (S)-malate + CoA + H(+). Its pathway is carbohydrate metabolism; glyoxylate cycle; (S)-malate from isocitrate: step 2/2. This chain is Malate synthase, glyoxysomal, found in Brassica napus (Rape).